Consider the following 257-residue polypeptide: Probable septum site-determining protein MinC (257 aa).

Residues 123–141 show a composition bias toward low complexity; the sequence is AVEAAAAPAAEPTPEPGAA. The disordered stretch occupies residues 123 to 144; it reads AVEAAAAPAAEPTPEPGAASQP.

This sequence belongs to the MinC family. Interacts with MinD and FtsZ.

Cell division inhibitor that blocks the formation of polar Z ring septums. Rapidly oscillates between the poles of the cell to destabilize FtsZ filaments that have formed before they mature into polar Z rings. Prevents FtsZ polymerization. This Burkholderia multivorans (strain ATCC 17616 / 249) protein is Probable septum site-determining protein MinC.